The following is a 439-amino-acid chain: 2-(3-amino-3-carboxypropyl)histidine synthase subunit 1 (439 aa).

Residues 11-54 are disordered; the sequence is STTATPVAPCDPDTCKKSTSTQPRKRFVGRANGSGPSASTSLVK. The segment covering 44-54 has biased composition (polar residues); it reads SGPSASTSLVK. [4Fe-4S] cluster-binding residues include Cys147, Cys251, and Cys380.

The protein belongs to the DPH1/DPH2 family. DPH1 subfamily. As to quaternary structure, component of the 2-(3-amino-3-carboxypropyl)histidine synthase complex composed of DPH1, DPH2, DPH3 and a NADH-dependent reductase, predominantly CBR1. Requires [4Fe-4S] cluster as cofactor.

It localises to the cytoplasm. It carries out the reaction L-histidyl-[translation elongation factor 2] + S-adenosyl-L-methionine = 2-[(3S)-amino-3-carboxypropyl]-L-histidyl-[translation elongation factor 2] + S-methyl-5'-thioadenosine + H(+). The protein operates within protein modification; peptidyl-diphthamide biosynthesis. Functionally, catalyzes the first step of diphthamide biosynthesis, a post-translational modification of histidine which occurs in elongation factor 2. DPH1 and DPH2 transfer a 3-amino-3-carboxypropyl (ACP) group from S-adenosyl-L-methionine (SAM) to a histidine residue, the reaction is assisted by a reduction system comprising DPH3 and a NADH-dependent reductase, predominantly CBR1. The chain is 2-(3-amino-3-carboxypropyl)histidine synthase subunit 1 (DPH1) from Yarrowia lipolytica (strain CLIB 122 / E 150) (Yeast).